The sequence spans 576 residues: DNA primase (576 aa).

The CHC2-type zinc finger occupies 40–64; it reads CPFHNEKTPSFNVVAKKQFYHCFGC. A Toprim domain is found at 251 to 333; the sequence is DSIIVVEGYM…GLDAGFIFLP (83 aa). Residues Glu257, Asp301, and Asp303 each contribute to the Mg(2+) site.

Belongs to the DnaG primase family. In terms of assembly, monomer. Interacts with DnaB. It depends on Zn(2+) as a cofactor. Mg(2+) serves as cofactor.

It catalyses the reaction ssDNA + n NTP = ssDNA/pppN(pN)n-1 hybrid + (n-1) diphosphate.. In terms of biological role, RNA polymerase that catalyzes the synthesis of short RNA molecules used as primers for DNA polymerase during DNA replication. The chain is DNA primase from Legionella pneumophila.